The following is a 254-amino-acid chain: Pyridoxine 5'-phosphate synthase (254 aa).

A 3-amino-2-oxopropyl phosphate-binding site is contributed by Asn8. 10-11 provides a ligand contact to 1-deoxy-D-xylulose 5-phosphate; sequence DH. A 3-amino-2-oxopropyl phosphate-binding site is contributed by Arg19. His44 acts as the Proton acceptor in catalysis. Positions 46 and 51 each coordinate 1-deoxy-D-xylulose 5-phosphate. Glu74 acts as the Proton acceptor in catalysis. Thr104 serves as a coordination point for 1-deoxy-D-xylulose 5-phosphate. Catalysis depends on His198, which acts as the Proton donor. Residues Gly199 and 220 to 221 contribute to the 3-amino-2-oxopropyl phosphate site; that span reads GH.

This sequence belongs to the PNP synthase family. As to quaternary structure, homooctamer; tetramer of dimers.

The protein resides in the cytoplasm. The enzyme catalyses 3-amino-2-oxopropyl phosphate + 1-deoxy-D-xylulose 5-phosphate = pyridoxine 5'-phosphate + phosphate + 2 H2O + H(+). It functions in the pathway cofactor biosynthesis; pyridoxine 5'-phosphate biosynthesis; pyridoxine 5'-phosphate from D-erythrose 4-phosphate: step 5/5. In terms of biological role, catalyzes the complicated ring closure reaction between the two acyclic compounds 1-deoxy-D-xylulose-5-phosphate (DXP) and 3-amino-2-oxopropyl phosphate (1-amino-acetone-3-phosphate or AAP) to form pyridoxine 5'-phosphate (PNP) and inorganic phosphate. The protein is Pyridoxine 5'-phosphate synthase of Caulobacter vibrioides (strain ATCC 19089 / CIP 103742 / CB 15) (Caulobacter crescentus).